Consider the following 984-residue polypeptide: Putative formate dehydrogenase SAV2309 (984 aa).

In terms of domain architecture, 2Fe-2S ferredoxin-type spans 3–79; that stretch reads EHLVVTLDGK…PMTVNTVNND (77 aa). [2Fe-2S] cluster is bound by residues Cys37, Cys48, Cys51, and Cys63. One can recognise a 4Fe-4S His(Cys)3-ligated-type domain in the interval 79–119; that stretch reads DVKDAQKEALDRILEKHMLYCTVCDYNNGDCEIHNTMDAWG. Residues His95, Cys99, Cys102, Cys109, Cys147, Cys150, Cys153, Cys157, Cys190, Cys193, Cys196, Cys200, Cys264, Cys267, Cys271, and Cys299 each coordinate [4Fe-4S] cluster. 2 4Fe-4S ferredoxin-type domains span residues 138-165 and 181-211; these read PFYRYDPNQCILCGRCVEACQDIEVNET and NDVPINESSCVSCGQCATVCPCNAMMEVNME. The tract at residues 252 to 984 is formate dehydrogenase; that stretch reads MRKERIKKTK…YVFPGNQVDK (733 aa). In terms of domain architecture, 4Fe-4S Mo/W bis-MGD-type spans 257-313; it reads IKKTKTVCTYCGVGCSFEVWTKDREILKVQPSHDSPANKIVTCVKGKFSWGHINSDQ.

In the C-terminal section; belongs to the prokaryotic molybdopterin-containing oxidoreductase family. [2Fe-2S] cluster is required as a cofactor. [4Fe-4S] cluster serves as cofactor. It depends on Mo-bis(molybdopterin guanine dinucleotide) as a cofactor.

It catalyses the reaction formate + NAD(+) = CO2 + NADH. The polypeptide is Putative formate dehydrogenase SAV2309 (Staphylococcus aureus (strain Mu50 / ATCC 700699)).